The primary structure comprises 377 residues: Protein RecA (377 aa).

Position 82-89 (82-89 (GPESSGKT)) interacts with ATP. The disordered stretch occupies residues 345–377 (EGSEVSANSMRPLASAARQASSRPNLSQVSANG). Residues 362 to 377 (RQASSRPNLSQVSANG) are compositionally biased toward polar residues.

Belongs to the RecA family.

The protein localises to the cytoplasm. In terms of biological role, can catalyze the hydrolysis of ATP in the presence of single-stranded DNA, the ATP-dependent uptake of single-stranded DNA by duplex DNA, and the ATP-dependent hybridization of homologous single-stranded DNAs. It interacts with LexA causing its activation and leading to its autocatalytic cleavage. This chain is Protein RecA, found in Prochlorococcus marinus (strain NATL2A).